A 118-amino-acid chain; its full sequence is Large ribosomal subunit protein bL20 (118 aa).

It belongs to the bacterial ribosomal protein bL20 family.

Binds directly to 23S ribosomal RNA and is necessary for the in vitro assembly process of the 50S ribosomal subunit. It is not involved in the protein synthesizing functions of that subunit. This Phenylobacterium zucineum (strain HLK1) protein is Large ribosomal subunit protein bL20.